Consider the following 318-residue polypeptide: L-lactate dehydrogenase (318 aa).

NAD(+)-binding positions include Val18, Asp39, Lys44, Tyr69, and 83–84 (GA). Substrate-binding residues include Gln86 and Arg92. NAD(+) contacts are provided by residues Ser105, 122–124 (VSN), and Ser147. 124–127 (NPVD) is a binding site for substrate. 152–155 (DTSR) contacts substrate. Residue His179 is the Proton acceptor of the active site. Tyr225 is subject to Phosphotyrosine. Thr234 contacts substrate.

It belongs to the LDH/MDH superfamily. LDH family. In terms of assembly, homotetramer.

It localises to the cytoplasm. The catalysed reaction is (S)-lactate + NAD(+) = pyruvate + NADH + H(+). Its pathway is fermentation; pyruvate fermentation to lactate; (S)-lactate from pyruvate: step 1/1. Its function is as follows. Catalyzes the conversion of lactate to pyruvate. This chain is L-lactate dehydrogenase, found in Clostridium botulinum (strain Kyoto / Type A2).